A 289-amino-acid chain; its full sequence is Oxaloacetate decarboxylase (289 aa).

Ser50 provides a ligand contact to substrate. Asp88 is a binding site for Mg(2+). Residues Arg159 and His235 each contribute to the substrate site.

Belongs to the isocitrate lyase family. Oxaloacetate decarboxylase subfamily. As to quaternary structure, homotetramer; dimer of dimers. It depends on Mg(2+) as a cofactor.

It carries out the reaction oxaloacetate + H(+) = pyruvate + CO2. Functionally, catalyzes the decarboxylation of oxaloacetate into pyruvate. Seems to play a role in maintaining cellular concentrations of bicarbonate and pyruvate. This Pseudomonas fluorescens (strain SBW25) protein is Oxaloacetate decarboxylase.